The sequence spans 377 residues: RIB43A-like with coiled-coils protein 2 (377 aa).

Coiled-coil stretches lie at residues 217–250 and 282–308; these read NKNQ…LRGD and EEIR…RDMD.

Belongs to the RIB43A family. In terms of assembly, microtubule inner protein component of sperm flagellar doublet microtubules. As to expression, expressed in trachea multiciliated cells.

The protein localises to the cytoplasm. It is found in the cytoskeleton. It localises to the cilium axoneme. The protein resides in the flagellum axoneme. Its function is as follows. Microtubule inner protein (MIP) part of the dynein-decorated doublet microtubules (DMTs) in cilia axoneme, which is required for motile cilia beating. This chain is RIB43A-like with coiled-coils protein 2, found in Bos taurus (Bovine).